A 309-amino-acid polypeptide reads, in one-letter code: Homoserine O-succinyltransferase (309 aa).

The active-site Acyl-thioester intermediate is cysteine 142. Residues lysine 163 and serine 192 each coordinate substrate. Histidine 235 functions as the Proton acceptor in the catalytic mechanism. The active site involves glutamate 237. Arginine 249 lines the substrate pocket.

The protein belongs to the MetA family.

It localises to the cytoplasm. The enzyme catalyses L-homoserine + succinyl-CoA = O-succinyl-L-homoserine + CoA. It functions in the pathway amino-acid biosynthesis; L-methionine biosynthesis via de novo pathway; O-succinyl-L-homoserine from L-homoserine: step 1/1. Its function is as follows. Transfers a succinyl group from succinyl-CoA to L-homoserine, forming succinyl-L-homoserine. This Edwardsiella ictaluri (strain 93-146) protein is Homoserine O-succinyltransferase.